A 652-amino-acid polypeptide reads, in one-letter code: Acetyl-coenzyme A synthetase (652 aa).

CoA-binding positions include 190-193 (RGGR) and T310. ATP is bound by residues 386 to 388 (GEP), 410 to 415 (DTWWQT), D499, and R514. S522 lines the CoA pocket. R525 serves as a coordination point for ATP. The Mg(2+) site is built by V536, H538, and V541. R583 contacts CoA. At K608 the chain carries N6-acetyllysine.

Belongs to the ATP-dependent AMP-binding enzyme family. Mg(2+) is required as a cofactor. Post-translationally, acetylated. Deacetylation by the SIR2-homolog deacetylase activates the enzyme.

It carries out the reaction acetate + ATP + CoA = acetyl-CoA + AMP + diphosphate. Functionally, catalyzes the conversion of acetate into acetyl-CoA (AcCoA), an essential intermediate at the junction of anabolic and catabolic pathways. AcsA undergoes a two-step reaction. In the first half reaction, AcsA combines acetate with ATP to form acetyl-adenylate (AcAMP) intermediate. In the second half reaction, it can then transfer the acetyl group from AcAMP to the sulfhydryl group of CoA, forming the product AcCoA. The polypeptide is Acetyl-coenzyme A synthetase (Methylorubrum extorquens (strain CM4 / NCIMB 13688) (Methylobacterium extorquens)).